We begin with the raw amino-acid sequence, 235 residues long: Matrix protein (235 aa).

Belongs to the nucleorhabdovirus type-2 matrix protein family. As to quaternary structure, homomultimer. Interacts with nucleoprotein and with the cytoplasmic domain of glycoprotein.

The protein localises to the virion membrane. Its subcellular location is the host endomembrane system. Plays a major role in assembly and budding of virion. Completely covers the ribonucleoprotein coil and keep it in condensed bullet-shaped form. Inhibits viral transcription and stimulates replication. This chain is Matrix protein (M), found in Rottboellia (Sorghum).